The primary structure comprises 241 residues: Chromosome partition protein MukE (241 aa).

The disordered stretch occupies residues 207 to 241 (DGEAATPDSLSQEKSAVKNDEEIEDELDEGLGEEE). The span at 227 to 241 (EEIEDELDEGLGEEE) shows a compositional bias: acidic residues.

It belongs to the MukE family. Interacts, and probably forms a ternary complex, with MukF and MukB. The complex formation is stimulated by calcium or magnesium.

It localises to the cytoplasm. Its subcellular location is the nucleoid. Involved in chromosome condensation, segregation and cell cycle progression. May participate in facilitating chromosome segregation by condensation DNA from both sides of a centrally located replisome during cell division. Probably acts via its interaction with MukB and MukF. The polypeptide is Chromosome partition protein MukE (Mannheimia succiniciproducens (strain KCTC 0769BP / MBEL55E)).